The chain runs to 102 residues: uncharacterized protein (102 aa).

The segment at 1–41 (MAAPRQIAFYGKGGTGKPKRKPEPVTASKEDRCLGSPSKNK) is disordered.

The protein to the N-terminal of nitrogenase iron protein (NifH). Has lost the ATP-binding site.

This protein is either not expressed, expressed at low levels or rapidly degraded. This is an uncharacterized protein from Rhizobium meliloti (Ensifer meliloti).